The following is a 150-amino-acid chain: Large ribosomal subunit protein bL9 (150 aa).

The protein belongs to the bacterial ribosomal protein bL9 family.

Binds to the 23S rRNA. This is Large ribosomal subunit protein bL9 from Polynucleobacter asymbioticus (strain DSM 18221 / CIP 109841 / QLW-P1DMWA-1) (Polynucleobacter necessarius subsp. asymbioticus).